A 229-amino-acid polypeptide reads, in one-letter code: Probable queuosine precursor transporter (229 aa).

7 helical membrane-spanning segments follow: residues 6 to 26 (FWIF…KGFG), 28 to 48 (MGLF…VVKT), 49 to 69 (VELF…IFFA), 86 to 106 (VWLG…VLLF), 118 to 138 (LETI…AFIF), 160 to 182 (LWLR…FTAV), and 192 to 214 (VWLH…SLPY).

This sequence belongs to the vitamin uptake transporter (VUT/ECF) (TC 2.A.88) family. Q precursor transporter subfamily.

The protein localises to the cell membrane. Its function is as follows. Involved in the import of queuosine (Q) precursors, required for Q precursor salvage. The sequence is that of Probable queuosine precursor transporter (ypdP) from Bacillus subtilis (strain 168).